We begin with the raw amino-acid sequence, 294 residues long: 4-diphosphocytidyl-2-C-methyl-D-erythritol kinase (294 aa).

Lys-11 is a catalytic residue. Residue 93–103 participates in ATP binding; that stretch reads PFGAGLGGGSS. Asp-135 is a catalytic residue.

This sequence belongs to the GHMP kinase family. IspE subfamily.

It catalyses the reaction 4-CDP-2-C-methyl-D-erythritol + ATP = 4-CDP-2-C-methyl-D-erythritol 2-phosphate + ADP + H(+). Its pathway is isoprenoid biosynthesis; isopentenyl diphosphate biosynthesis via DXP pathway; isopentenyl diphosphate from 1-deoxy-D-xylulose 5-phosphate: step 3/6. In terms of biological role, catalyzes the phosphorylation of the position 2 hydroxy group of 4-diphosphocytidyl-2C-methyl-D-erythritol. The polypeptide is 4-diphosphocytidyl-2-C-methyl-D-erythritol kinase (Chlorobium phaeobacteroides (strain DSM 266 / SMG 266 / 2430)).